The primary structure comprises 404 residues: Phosphopentomutase (404 aa).

6 residues coordinate Mn(2+): Asp10, Asp303, His308, Asp344, His345, and His356.

It belongs to the phosphopentomutase family. It depends on Mn(2+) as a cofactor.

The protein resides in the cytoplasm. The catalysed reaction is 2-deoxy-alpha-D-ribose 1-phosphate = 2-deoxy-D-ribose 5-phosphate. The enzyme catalyses alpha-D-ribose 1-phosphate = D-ribose 5-phosphate. It participates in carbohydrate degradation; 2-deoxy-D-ribose 1-phosphate degradation; D-glyceraldehyde 3-phosphate and acetaldehyde from 2-deoxy-alpha-D-ribose 1-phosphate: step 1/2. Isomerase that catalyzes the conversion of deoxy-ribose 1-phosphate (dRib-1-P) and ribose 1-phosphate (Rib-1-P) to deoxy-ribose 5-phosphate (dRib-5-P) and ribose 5-phosphate (Rib-5-P), respectively. The polypeptide is Phosphopentomutase (Shewanella sp. (strain W3-18-1)).